The sequence spans 399 residues: Forkhead box protein A4 (399 aa).

The fork-head DNA-binding region spans 119–213 (KPPYSYISLI…ENGCYLRRQK (95 aa)). The span at 219–234 (RSKSGEREKKVNKPGD) shows a compositional bias: basic and acidic residues. The interval 219 to 290 (RSKSGEREKK…VGLSPTSEQA (72 aa)) is disordered. Polar residues predominate over residues 267-277 (STGSSIHQASG).

The protein localises to the nucleus. Functionally, transcriptional repressor involved in embryonic nervous system development. Plays a role in the induction and patterning of the anterior-posterior neural axis. Involved in the establishment of floor plate differentiation from neural plate cells during gastrulation. Binds the anf1 promoter sequence to restrict expression of anf1 to the anterior of the neural plate, thereby patterning the forebrain. Can bind to the HNF-3-alpha DNA target sequence. Cooperates with t/bra in a dose-dependent manner to specify dorsal mesoderm formation, including notochord. May be involved in the dorso-ventral patterning of the mesoderm. Binds to DNA via the target sequence 5'-[GA]TAAA[TC]A-3', with 5'-GTAAATA-3' being the preferred binding site. This chain is Forkhead box protein A4, found in Xenopus tropicalis (Western clawed frog).